The chain runs to 428 residues: AA14 family lytic polysaccharide monooxygenase A (428 aa).

An N-terminal signal peptide occupies residues 1–21 (MLRSLPASLALVAAFASKASA). Residues Asn-34 and Asn-52 are each glycosylated (N-linked (GlcNAc...) asparagine). Disulfide bonds link Cys-88–Cys-112, Cys-131–Cys-158, Cys-174–Cys-179, Cys-181–Cys-203, and Cys-223–Cys-239. The N-linked (GlcNAc...) asparagine glycan is linked to Asn-155. Disordered regions lie at residues 216 to 239 (KPAVPRRCGADPDHGKPDPTPGNC) and 292 to 428 (SSGT…HNAH). Over residues 223-232 (CGADPDHGKP) the composition is skewed to basic and acidic residues. N-linked (GlcNAc...) asparagine glycosylation occurs at Asn-238. The span at 292-379 (SSGTGSSPTS…SVATEASSSP (88 aa)) shows a compositional bias: low complexity. Over residues 380 to 402 (IASTTVDEAVVSSSTVGSINPTR) the composition is skewed to polar residues. The span at 414-428 (QKKKRKHARHLHNAH) shows a compositional bias: basic residues.

The cofactor is Cu(2+).

The protein resides in the secreted. Its function is as follows. Lytic polysaccharide monooxygenase (LPMO) showing oxidase and peroxidase activities that are common for LPMOs. Catalysis by LPMOs requires the reduction of the active-site copper from Cu(II) to Cu(I) by a reducing agent and H(2)O(2) or O(2) as a cosubstrate. Shows no activity on cellulose-associated xylan or any other tested polysaccharide substrate, meaning that the substrate rremains unknown. This is AA14 family lytic polysaccharide monooxygenase A from Trametes coccinea (strain BRFM310) (Pycnoporus coccineus).